The sequence spans 435 residues: 3-phosphoshikimate 1-carboxyvinyltransferase (435 aa).

3 residues coordinate 3-phosphoshikimate: Lys-15, Ser-16, and Arg-20. A phosphoenolpyruvate-binding site is contributed by Lys-15. Positions 96 and 124 each coordinate phosphoenolpyruvate. Positions 169, 171, 195, 318, and 345 each coordinate 3-phosphoshikimate. Gln-171 contacts phosphoenolpyruvate. Asp-318 acts as the Proton acceptor in catalysis. 2 residues coordinate phosphoenolpyruvate: Arg-349 and Arg-393.

It belongs to the EPSP synthase family. Monomer.

Its subcellular location is the cytoplasm. The catalysed reaction is 3-phosphoshikimate + phosphoenolpyruvate = 5-O-(1-carboxyvinyl)-3-phosphoshikimate + phosphate. It functions in the pathway metabolic intermediate biosynthesis; chorismate biosynthesis; chorismate from D-erythrose 4-phosphate and phosphoenolpyruvate: step 6/7. Catalyzes the transfer of the enolpyruvyl moiety of phosphoenolpyruvate (PEP) to the 5-hydroxyl of shikimate-3-phosphate (S3P) to produce enolpyruvyl shikimate-3-phosphate and inorganic phosphate. The sequence is that of 3-phosphoshikimate 1-carboxyvinyltransferase from Chlorobium chlorochromatii (strain CaD3).